A 158-amino-acid chain; its full sequence is SsrA-binding protein (158 aa).

This sequence belongs to the SmpB family.

The protein localises to the cytoplasm. In terms of biological role, required for rescue of stalled ribosomes mediated by trans-translation. Binds to transfer-messenger RNA (tmRNA), required for stable association of tmRNA with ribosomes. tmRNA and SmpB together mimic tRNA shape, replacing the anticodon stem-loop with SmpB. tmRNA is encoded by the ssrA gene; the 2 termini fold to resemble tRNA(Ala) and it encodes a 'tag peptide', a short internal open reading frame. During trans-translation Ala-aminoacylated tmRNA acts like a tRNA, entering the A-site of stalled ribosomes, displacing the stalled mRNA. The ribosome then switches to translate the ORF on the tmRNA; the nascent peptide is terminated with the 'tag peptide' encoded by the tmRNA and targeted for degradation. The ribosome is freed to recommence translation, which seems to be the essential function of trans-translation. The chain is SsrA-binding protein from Acinetobacter baumannii (strain AB307-0294).